Consider the following 172-residue polypeptide: Bcl-2-related protein A1 (172 aa).

The BH1 signature appears at 77–97 (KEFEDGIINWGRIVTIFAFGG). Positions 132–147 (EWIRQNGGWEDGFIKK) match the BH2 motif.

This sequence belongs to the Bcl-2 family. In terms of assembly, interacts directly with BCL2L11/BIM and PMAIP1. Interacts directly with BAK1, BID, BMF and BBC3. Interacts with BOP. Interacts with isoform 3, isoform 4 and isoform 5 of ING4. Interacts with UBQLN4. Expressed in hemopoietic tissues, including bone marrow, spleen and thymus.

Its subcellular location is the cytoplasm. In terms of biological role, retards apoptosis induced by IL-3 deprivation. May function in the response of hemopoietic cells to external signals and in maintaining endothelial survival during infection. Can inhibit apoptosis induced by serum starvation in the mammary epithelial cell line HC11. In Mus musculus (Mouse), this protein is Bcl-2-related protein A1 (Bcl2a1).